A 335-amino-acid chain; its full sequence is MRISILGAGAWGTALAIALAERHDVVLWGRSEDAMAQRARSXENTAYLPGHPLPAALKATADFSLALDHVAQGDGLLIAATSVAGLRPLAQQLQGKAIPNLVWLCKGLEEGSGLLPHQVVREVLGTQLPAGVLSGPSFAQEVAQGLPCALVIAAEDAALRELVVAAVHGPAIRVYSSDDVVGVEVGGAVKNILAIATGILDGMSLGLNARAALITRGLAEITRLGIALGARAETFMGLAGVGDLILTCTGDLSRNRKVGLGLAQGKPLETIVTELGHVAEGVRCAAAVRNLAQQLQIEMPITNAVAGILFDGHSPRATVEQLLARHPRDESISAS.

The NADPH site is built by tryptophan 11, arginine 30, and lysine 106. Lysine 106, glycine 135, and serine 137 together coordinate sn-glycerol 3-phosphate. Residue alanine 139 coordinates NADPH. Lysine 190, aspartate 243, serine 253, arginine 254, and asparagine 255 together coordinate sn-glycerol 3-phosphate. Lysine 190 acts as the Proton acceptor in catalysis. NADPH is bound at residue arginine 254. Positions 278 and 280 each coordinate NADPH.

It belongs to the NAD-dependent glycerol-3-phosphate dehydrogenase family.

It localises to the cytoplasm. The enzyme catalyses sn-glycerol 3-phosphate + NAD(+) = dihydroxyacetone phosphate + NADH + H(+). It catalyses the reaction sn-glycerol 3-phosphate + NADP(+) = dihydroxyacetone phosphate + NADPH + H(+). Its pathway is membrane lipid metabolism; glycerophospholipid metabolism. Catalyzes the reduction of the glycolytic intermediate dihydroxyacetone phosphate (DHAP) to sn-glycerol 3-phosphate (G3P), the key precursor for phospholipid synthesis. The polypeptide is Glycerol-3-phosphate dehydrogenase [NAD(P)+] (Paucimonas lemoignei (Pseudomonas lemoignei)).